Reading from the N-terminus, the 256-residue chain is UPF0246 protein HRM2_41860 (256 aa).

This sequence belongs to the UPF0246 family.

The polypeptide is UPF0246 protein HRM2_41860 (Desulforapulum autotrophicum (strain ATCC 43914 / DSM 3382 / VKM B-1955 / HRM2) (Desulfobacterium autotrophicum)).